Here is a 513-residue protein sequence, read N- to C-terminus: MQLNSTEISELIKQRIAQFNVVSEAHNEGTIVSVSDGIIRVHGLADVMQGEMIALPGNRYAIALNLERDSVGAVVMGPYADLAEGMKVKCTGRILEVPVGRGLLGRVVNTLGEPVDGKGPVENDGFSAVEAIAPGVIERQSVDEPVQTGYKSVDAMIPIGRGQRELIIGDRQTGKTALAIDAIINQRDSGIKCVYVAIGQKASTVANVVRKLEEHGALANTIVVVATASESAALQYLAPYSGCAMGEYFRDRGEDALIIYDDLSKQAVAYRQISLLLRRPPGREAYPGDVFYLHSRLLERAARVNADYVEAFTKGEVKGKTGSLTALPIIETQAGDVSAFVPTNVISITDGQIFLESSLFNAGIRPAVNPGISVSRVGGAAQTKIMKKLSGGIRTALAQYRELAAFSQFASDLDDATRKQLSHGQKVTELLKQKQYAPMSVAQQSLVLFAAERGYLGDIELAKVGSFEAALLAFADREHAELLQQINQTGAYNDEIEAKLKGILDTFKATQSW.

Gly169–Thr176 provides a ligand contact to ATP.

Belongs to the ATPase alpha/beta chains family. In terms of assembly, F-type ATPases have 2 components, CF(1) - the catalytic core - and CF(0) - the membrane proton channel. CF(1) has five subunits: alpha(3), beta(3), gamma(1), delta(1), epsilon(1). CF(0) has three main subunits: a(1), b(2) and c(9-12). The alpha and beta chains form an alternating ring which encloses part of the gamma chain. CF(1) is attached to CF(0) by a central stalk formed by the gamma and epsilon chains, while a peripheral stalk is formed by the delta and b chains.

The protein resides in the cell inner membrane. It carries out the reaction ATP + H2O + 4 H(+)(in) = ADP + phosphate + 5 H(+)(out). Produces ATP from ADP in the presence of a proton gradient across the membrane. The alpha chain is a regulatory subunit. This chain is ATP synthase subunit alpha, found in Yersinia enterocolitica serotype O:8 / biotype 1B (strain NCTC 13174 / 8081).